A 232-amino-acid chain; its full sequence is C4-dicarboxylate TRAP transporter small permease protein DctQ (232 aa).

4 consecutive transmembrane segments (helical) span residues 30–50 (EFLI…NVIM), 58–78 (ILWA…VGAS), 103–123 (LYAL…LIGS), and 167–187 (FIPY…FLQI).

The protein belongs to the TRAP transporter small permease family. As to quaternary structure, the complex comprises the extracytoplasmic solute receptor protein DctP, and the two transmembrane proteins DctQ and DctM.

The protein resides in the cell inner membrane. Its function is as follows. Part of the tripartite ATP-independent periplasmic (TRAP) transport system DctPQM involved in C4-dicarboxylates uptake. The chain is C4-dicarboxylate TRAP transporter small permease protein DctQ from Vibrio cholerae serotype O1 (strain ATCC 39315 / El Tor Inaba N16961).